We begin with the raw amino-acid sequence, 967 residues long: MAELNFKAIEEKWQKRWLEAKIFEPNIRDKPKEKKFYITVAFPYLSGHLHVGHARTYTIPDVIARFKRMQGYNVLFPMAWHITGSPIVGIAERIKNRDPKTIWIYRDVYKVPEEILWTFEDPINIVKYFMKAAKETFIRAGFSVDWSREFYTTSLFPPFSKFIEWQFWKLKEKGYIVKGAHRVRWDPVVGTPLGDHDLMEGEDVPILDYIIIKFELRENGEVIYLPAATLRPETVYGVTNMWVNPNATYVKAKVRRKDKEETWIVSKEAAYKLSFQDREIEVIEEFKGEKLIGKYVRNPVSGDEVIILPAEFVDPDNATGVVMSVPAHAPFDHVALEDLKRETEILEKYDIDPRIVENITYISLIKLEGYGDFPAVEEVNKLGIKSQKDKEKLEQATKTIYKAEYHKGIFKVPPYEGKPVQEVKEAIAKEMLEKGIAEIMYEFAEKNVISRFGNRAVIKIIHDQWFIDYGNPEWKEKARKALERMKILPETRRAQFEAIIDWLDKKACARKIGLGTPLPWDPEWVIESLSDSTIYMAYYTISRHINKLRQEGKLDPEKLTPEFFDYIFLEEFSEDKEKELEKKTGIPAEIIHEMKEEFEYWYPLDWRCSGKDLIPNHLTFFIFNHVAIFREEHWPKGIAVNGFGTLEGQKMSKSKGNVLNFIDAIEENGADVVRLYIMSLAEHDSDFDWRRKEVGKLRKQIERFYELISQFAEYEVKGNVELKDIDRWMLHRLNKAIKETTNALEEFRTRTAVQWAFYSIMNDLRWYLRRTEGRDDEAKRYVLRTLADVWVRLMAPFTPHICEELWEKLGGEGFVSLAKWPEPVEEWWNETIEAEEEFIRSVMEDIKEIIEVAKIENAKRAYIYTAEDWKWKVAEVVSEKRDFKSSMEELMKDSEIRKHGKEVAKIVQKLIKERTFDVKRINEEKALREAKEFMEKELGIEIIINPTEDKGGKKKQAMPLKPAIFIE.

Residues 43 to 53 (PYLSGHLHVGH) carry the 'HIGH' region motif. Positions 650-654 (KMSKS) match the 'KMSKS' region motif. Residue K653 participates in ATP binding.

This sequence belongs to the class-I aminoacyl-tRNA synthetase family.

It localises to the cytoplasm. The catalysed reaction is tRNA(Leu) + L-leucine + ATP = L-leucyl-tRNA(Leu) + AMP + diphosphate. The sequence is that of Leucine--tRNA ligase from Pyrococcus horikoshii (strain ATCC 700860 / DSM 12428 / JCM 9974 / NBRC 100139 / OT-3).